The chain runs to 325 residues: ATP phosphoribosyltransferase (325 aa).

Belongs to the ATP phosphoribosyltransferase family. Long subfamily. It depends on Mg(2+) as a cofactor.

Its subcellular location is the cytoplasm. The enzyme catalyses 1-(5-phospho-beta-D-ribosyl)-ATP + diphosphate = 5-phospho-alpha-D-ribose 1-diphosphate + ATP. Its pathway is amino-acid biosynthesis; L-histidine biosynthesis; L-histidine from 5-phospho-alpha-D-ribose 1-diphosphate: step 1/9. Its activity is regulated as follows. Feedback inhibited by histidine. Functionally, catalyzes the condensation of ATP and 5-phosphoribose 1-diphosphate to form N'-(5'-phosphoribosyl)-ATP (PR-ATP). Has a crucial role in the pathway because the rate of histidine biosynthesis seems to be controlled primarily by regulation of HisG enzymatic activity. The protein is ATP phosphoribosyltransferase of Rhodopseudomonas palustris (strain BisB18).